Reading from the N-terminus, the 638-residue chain is Plasma kallikrein (638 aa).

The first 19 residues, 1-19 (MILFNRVGYFVSLFATVSC), serve as a signal peptide directing secretion. Apple domains lie at 21–104 (CMTQ…LKQC), 111–194 (CHRD…LKSC), 201–284 (CPMD…LLTC), and 292–375 (CHSK…LRLC). 18 disulfide bridges follow: Cys21–Cys104, Cys47–Cys77, Cys51–Cys57, Cys111–Cys194, Cys137–Cys166, Cys141–Cys147, Cys201–Cys284, Cys227–Cys256, Cys231–Cys237, Cys292–Cys375, Cys318–Cys347, Cys322–Cys328, Cys340–Cys345, Cys383–Cys503, Cys419–Cys435, Cys517–Cys584, Cys548–Cys563, and Cys574–Cys602. N-linked (GlcNAc...) asparagine glycosylation is present at Asn127. N-linked (GlcNAc...) asparagine glycosylation occurs at Asn215. Asn308 carries N-linked (GlcNAc...) asparagine glycosylation. Residues 391–626 (IVGGTNASLG…YMDWILEKTQ (236 aa)) form the Peptidase S1 domain. N-linked (GlcNAc...) asparagine glycosylation is present at Asn396. Active-site charge relay system residues include His434 and Asp483. Residue Asn494 is glycosylated (N-linked (GlcNAc...) asparagine). Ser578 serves as the catalytic Charge relay system.

Belongs to the peptidase S1 family. Plasma kallikrein subfamily. In terms of assembly, forms a heterodimer with SERPINA5. The zymogen is activated by factor XIIa, which cleaves the molecule into a light chain, which contains the active site, and a heavy chain, which associates with HMW kininogen. These chains are linked by one or more disulfide bonds.

Its subcellular location is the secreted. It catalyses the reaction Cleaves selectively Arg-|-Xaa and Lys-|-Xaa bonds, including Lys-|-Arg and Arg-|-Ser bonds in (human) kininogen to release bradykinin.. Its activity is regulated as follows. Inhibited by SERPINA5. Its function is as follows. The enzyme cleaves Lys-Arg and Arg-Ser bonds. It activates, in a reciprocal reaction, factor XII after its binding to a negatively charged surface. It also releases bradykinin from HMW kininogen and may also play a role in the renin-angiotensin system by converting prorenin into renin. The chain is Plasma kallikrein (Klkb1) from Mus musculus (Mouse).